Consider the following 339-residue polypeptide: Deubiquitinase and deneddylase Dub2 (339 aa).

The helical transmembrane segment at 36 to 56 (IIIALFLIVISCGLILCAYTF) threads the bilayer. Active-site residues include histidine 203, aspartate 220, and cysteine 282.

This sequence belongs to the peptidase C48 family.

The protein localises to the secreted. It is found in the host cell. It localises to the membrane. Functionally, effector proteins function to alter host cell physiology and promote bacterial survival in host tissues. This protease possesses deubiquitinating and deneddylating activities. This is Deubiquitinase and deneddylase Dub2 (cdu2) from Chlamydia trachomatis serovar L2 (strain ATCC VR-902B / DSM 19102 / 434/Bu).